Reading from the N-terminus, the 438-residue chain is RING finger protein 150 (438 aa).

An N-terminal signal peptide occupies residues 1-34 (MAMSLIQACCSLALSTWLLSFCFVHLLCLDFTVA). The Extracellular portion of the chain corresponds to 35-208 (EKEEWYTAFV…NLQKYVSRTS (174 aa)). N-linked (GlcNAc...) asparagine glycans are attached at residues asparagine 45, asparagine 125, asparagine 153, and asparagine 186. Positions 81-183 (SPKQDARGEV…PKGKEIVSLL (103 aa)) constitute a PA domain. A helical transmembrane segment spans residues 209–229 (VVFVSISFIVLMIISLAWLVF). The Cytoplasmic portion of the chain corresponds to 230–438 (YYIQRFRYAN…TDQDCEEVKS (209 aa)). An RING-type; atypical zinc finger spans residues 278–319 (CAVCIEGYKPNDVVRILPCRHLFHKSCVDPWLLDHRTCPMCK).

It localises to the membrane. The sequence is that of RING finger protein 150 (RNF150) from Homo sapiens (Human).